We begin with the raw amino-acid sequence, 431 residues long: Cleavage stimulation factor subunit 1 (431 aa).

WD repeat units lie at residues 106–145 (SHKG…AKSA), 171–210 (DHVD…AKRA), 215–254 (QEAE…CFVS), 260–301 (QHTD…TTFE), 303–343 (AHDG…TLVR), and 395–431 (GHNN…STTD).

In terms of assembly, homodimer. The CSTF complex is composed of CSTF1 (50 kDa subunit), CSTF2 (64 kDa subunit) and CSTF3 (77 kDa subunit). Interacts (via repeats WD) directly with CSTF3. Interacts (via repeat WD6) with BARD1. Interacts with ERCC6.

The protein resides in the nucleus. Its function is as follows. One of the multiple factors required for polyadenylation and 3'-end cleavage of mammalian pre-mRNAs. May be responsible for the interaction of CSTF with other factors to form a stable complex on the pre-mRNA. The chain is Cleavage stimulation factor subunit 1 (Cstf1) from Mus musculus (Mouse).